A 276-amino-acid polypeptide reads, in one-letter code: Integrin-binding sialoprotein (276 aa).

Residues 1–16 (MRSALLLACLLATASA) form the signal peptide. The segment at 54–251 (HRYKGSDSSE…EEPARGDSYR (198 aa)) is disordered. Positions 61–75 (SSEEEGDGSEEEEEG) are enriched in acidic residues. Positions 106–119 (QDCKGGQKGTRGDS) are enriched in basic and acidic residues. Positions 116-118 (RGD) match the Cell attachment site motif. Residues 120–144 (GDEDSDEEEEEEEEEEEEEEVEEQD) show a composition bias toward acidic residues. Positions 145–165 (VSVNGTSTNTTAETPHGNNTV) are enriched in polar residues. N-linked (GlcNAc...) asparagine glycosylation is found at Asn148, Asn153, and Asn162. The span at 167-188 (AEEEEDDDEEEEEEEEEEEEAE) shows a compositional bias: acidic residues. Low complexity predominate over residues 189–200 (ATTAAATTAQDE). The short motif at 228–230 (RGD) is the Cell attachment site element. Residues 246–248 (RGD) carry the Integrin-binding motif motif. A sulfotyrosine mark is found at Tyr272 and Tyr273.

As to quaternary structure, monomer. Interacts with integrins; the interaction promotes cell adhesion. Phosphorylated on serine and threonine residues.

The protein localises to the secreted. Its function is as follows. Binds tightly to hydroxyapatite. Appears to form an integral part of the mineralized matrix. Probably important to cell-matrix interaction. Promotes adhesion and migration of various cells via the alpha-V/beta-3 integrin receptor (ITGAV:ITGB3). The sequence is that of Integrin-binding sialoprotein (IBSP) from Gallus gallus (Chicken).